Reading from the N-terminus, the 341-residue chain is Mitochondrial transcription factor 1 (341 aa).

4 residues coordinate S-adenosyl-L-methionine: Leu-23, Glu-77, Asp-101, and Asn-137.

This sequence belongs to the class I-like SAM-binding methyltransferase superfamily. rRNA adenine N(6)-methyltransferase family.

It is found in the mitochondrion intermembrane space. Mitochondrial transcription factor that confers selective promoter recognition on the core subunit of the yeast mitochondrial RNA polymerase. Interacts with DNA in a non-specific manner. The sequence is that of Mitochondrial transcription factor 1 (MTF1) from Saccharomyces cerevisiae (strain ATCC 204508 / S288c) (Baker's yeast).